The chain runs to 139 residues: ATP synthase epsilon chain (139 aa).

Belongs to the ATPase epsilon chain family. F-type ATPases have 2 components, CF(1) - the catalytic core - and CF(0) - the membrane proton channel. CF(1) has five subunits: alpha(3), beta(3), gamma(1), delta(1), epsilon(1). CF(0) has three main subunits: a, b and c.

It localises to the cell membrane. In terms of biological role, produces ATP from ADP in the presence of a proton gradient across the membrane. The sequence is that of ATP synthase epsilon chain from Enterococcus faecalis (strain ATCC 700802 / V583).